Here is a 179-residue protein sequence, read N- to C-terminus: Ribosomal RNA small subunit methyltransferase G (179 aa).

Residues Gly54, Phe59, Ile105–Glu106, and Arg121 each bind S-adenosyl-L-methionine.

The protein belongs to the methyltransferase superfamily. RNA methyltransferase RsmG family.

The protein localises to the cytoplasm. It carries out the reaction guanosine(527) in 16S rRNA + S-adenosyl-L-methionine = N(7)-methylguanosine(527) in 16S rRNA + S-adenosyl-L-homocysteine. Specifically methylates the N7 position of guanine in position 527 of 16S rRNA. The chain is Ribosomal RNA small subunit methyltransferase G from Helicobacter bizzozeronii.